The primary structure comprises 390 residues: Transforming protein cbl (390 aa).

The interval 1 to 52 (ASAGGGCRRGPSFSPGSIPSLAAERAPDPPLAMAGNVKKSSGAGGGGSGGSG) is disordered. A compositionally biased stretch (gly residues) spans 42–52 (GAGGGGSGGSG). Residues 77–205 (PPCTVDKKMV…KGIFPSGLFQ (129 aa)) form a 4H region. Residues 77–381 (PPCTVDKKMV…GRNQNPDLTG (305 aa)) enclose the Cbl-PTB domain. The tract at residues 206–278 (GDTFRITKAD…FEFDIFTRLF (73 aa)) is EF-hand-like. 5 residues coordinate Ca(2+): Asp-259, Thr-261, Asn-263, Tyr-265, and Glu-270. The tract at residues 279-381 (QPWSSLLRNW…GRNQNPDLTG (103 aa)) is SH2-like. Residue Arg-324 coordinates 4-O-phospho-L-tyrosine.

Functionally, induces early B-lineage lymphomas. This Mus musculus (Mouse) protein is Transforming protein cbl (V-CBL).